The primary structure comprises 92 residues: Larval cuticle protein 9 (92 aa).

The N-terminal stretch at M1–A16 is a signal peptide. Residues L31–A92 enclose the Chitin-binding type R&amp;R domain.

Component of the cuticle of the larva. This is Larval cuticle protein 9 (Lcp9) from Drosophila melanogaster (Fruit fly).